The primary structure comprises 504 residues: MLRVRKRRAAPQDIYPACKVANNCPPDIQNKIEQTTVADKILQYGSLGIFLGGLGIGTGKGGGGRYGYTPLGDSGAVRVGGRSTPVRPTVPVETVGPRDILPIDSLDPLGPSVIELEDIPATTVEVVAEVHPISDTPQIPAPTTDESSSAVLHIPQESPAARTITRSQYNNPLFRITASADIASGEASASDNIFIDVDTPGQIVGQEIPLVNFDMGPISTEGELETEFTTSTPRTTQVQERPTRFYNRRYYEQVPVTAPEFITRPASLVTFENPAFERSVSLIFEQDLEDILNAPDQDFRDIVYLSRPTYSRAPDGRMRLSRLGRRATISTRSGVTIGAQSHFYMDISSISSNDGIELQTLGEASGETVVQSSLAASDPIEAEHSFIEPAPSIDSYDIVSLQSETYSDEHLLDMYEPVGSSLQLQISDVRGRPTVIDIPFRPRRPPLGPINAGVDIYSPTASVGSPTINPTDLDIPLIIIHLDNSTGDYDLHPSLRKRRKLVHI.

Residues 1 to 9 (MLRVRKRRA) carry the Nuclear localization signal motif. An intrachain disulfide couples cysteine 18 to cysteine 24. Positions 497–504 (KRRKLVHI) match the Nuclear localization signal motif.

The protein belongs to the papillomaviridae L2 protein family. As to quaternary structure, interacts with major capsid protein L1. Interacts with E2; this interaction inhibits E2 transcriptional activity but not the DNA replication function E2. Interacts with host GADD45GIP1. Interacts with host HSPA8; this interaction is required for L2 nuclear translocation. Interacts with host importins KPNB2 and KPNB3. Forms a complex with importin alpha2-beta1 heterodimers via interaction with the importin alpha2 adapter. Interacts with host DYNLT1; this interaction is essential for virus intracellular transport during entry. Interacts (via C-terminus) with host retromer subunits VPS35 and VPS29. Post-translationally, highly phosphorylated.

The protein localises to the virion. The protein resides in the host nucleus. It is found in the host early endosome. It localises to the host Golgi apparatus. Functionally, minor protein of the capsid that localizes along the inner surface of the virion, within the central cavities beneath the L1 pentamers. Plays a role in capsid stabilization through interaction with the major capsid protein L1. Once the virion enters the host cell, L2 escorts the genomic DNA into the nucleus by promoting escape from the endosomal compartments and traffic through the host Golgi network. Mechanistically, the C-terminus of L2 possesses a cell-penetrating peptide that protudes from the host endosome, interacts with host cytoplasmic retromer cargo and thereby mediates the capsid delivery to the host trans-Golgi network. Plays a role through its interaction with host dynein in the intracellular microtubule-dependent transport of viral capsid toward the nucleus. Mediates the viral genome import into the nucleus through binding to host importins. Once within the nucleus, L2 localizes viral genomes to host PML bodies in order to activate early gene expression for establishment of infection. Later on, promotes late gene expression by interacting with the viral E2 protein and by inhibiting its transcriptional activation functions. During virion assembly, encapsidates the genome by direct interaction with the viral DNA. The sequence is that of Minor capsid protein L2 from Homo sapiens (Human).